Here is a 128-residue protein sequence, read N- to C-terminus: MAIWQGASRRLSTGAKVWRAAKKHKREMGRPAAETQISDRIKRKIVRCRGANLKVKLEKTNYANVFDQANKVCKKVAVTKVLDNKANKHYIRRNVMTKGAIIETEMGKAKVTSRPGQDGVVNAVLLTE.

This sequence belongs to the eukaryotic ribosomal protein eS8 family. Part of the 30S ribosomal subunit.

This chain is Small ribosomal subunit protein eS8, found in Methanococcus maripaludis (strain C7 / ATCC BAA-1331).